Consider the following 511-residue polypeptide: MVKQIMIQGTASDAGKSVLVAGLCRLFKNKGKQVVPFKSQNMSLNSFITVTGDEMGRAQVFQAEAAGVFPDVRMNPVLLKPTNDRQSQVIFMGAILDNMDAVTYHDFKQTLIPKIQAVYQSLADENDIIVLEGAGSPAEINLNDRDIVNMGMAKMVDAPVVLVADIDKGGVFASIYGTIMLLNEEERARIKGVIINKFRGDVALLQPGIDMIEELTNVPVIGVIPYANLQLEEEDSVSLSGKNYAPDSNALLDIAIICLPRISNFTDFHSLEIQPEISLRYIRNLADFGKPDLVIIPGSKNTLEDMAFLEESGLKKAIQNFAENAGKVIGICGGYQMLGQKMLDPNQVESRQLEIAGLGLLDTETIFLEQKRTTQITGVTHSGEAVEGYEIHMGETKRGESTSPFCKIKAVNGNEETHQDGAISANKNIIGTYIHGIFDNDVFLGNLFDELLTRKNQSIYPHEIINLKEHKEQEYDKLAALLEANIQMDQLEKIMKGEKICVSTQKPAIKE.

The region spanning 251–443 (LLDIAIICLP…IHGIFDNDVF (193 aa)) is the GATase cobBQ-type domain. Cys332 acts as the Nucleophile in catalysis. His435 is an active-site residue.

The protein belongs to the CobB/CobQ family. CobQ subfamily.

The protein operates within cofactor biosynthesis; adenosylcobalamin biosynthesis. Functionally, catalyzes amidations at positions B, D, E, and G on adenosylcobyrinic A,C-diamide. NH(2) groups are provided by glutamine, and one molecule of ATP is hydrogenolyzed for each amidation. This is Cobyric acid synthase from Listeria monocytogenes serotype 4a (strain HCC23).